Here is a 453-residue protein sequence, read N- to C-terminus: Phosphomannomutase (453 aa).

Ser96 functions as the Phosphoserine intermediate in the catalytic mechanism. Positions 96, 243, 245, and 247 each coordinate Mg(2+).

This sequence belongs to the phosphohexose mutase family. Requires Mg(2+) as cofactor.

The catalysed reaction is alpha-D-mannose 1-phosphate = D-mannose 6-phosphate. Its pathway is nucleotide-sugar biosynthesis; GDP-alpha-D-mannose biosynthesis; alpha-D-mannose 1-phosphate from D-fructose 6-phosphate: step 2/2. It functions in the pathway bacterial outer membrane biogenesis; LPS O-antigen biosynthesis. Involved in GDP-mannose biosynthesis which serves as the activated sugar nucleotide precursor for mannose residues in cell surface polysaccharides. This enzyme participates in synthesis of the LPS O7 antigen. The protein is Phosphomannomutase (manB) of Escherichia coli.